A 316-amino-acid polypeptide reads, in one-letter code: Acetaldehyde dehydrogenase (316 aa).

11 to 14 (SGNI) is an NAD(+) binding site. The active-site Acyl-thioester intermediate is the Cys131. Residues 162–170 (SAGPGTRAN) and Asn289 each bind NAD(+).

This sequence belongs to the acetaldehyde dehydrogenase family. Interacts with MhpE.

The catalysed reaction is acetaldehyde + NAD(+) + CoA = acetyl-CoA + NADH + H(+). Its pathway is aromatic compound metabolism; 3-phenylpropanoate degradation. In terms of biological role, catalyzes the conversion of acetaldehyde to acetyl-CoA, using NAD(+) and coenzyme A. Is the final enzyme in the meta-cleavage pathway for the degradation of aromatic compounds. In Escherichia coli O81 (strain ED1a), this protein is Acetaldehyde dehydrogenase.